The chain runs to 143 residues: Large ribosomal subunit protein uL11 (143 aa).

This sequence belongs to the universal ribosomal protein uL11 family. As to quaternary structure, part of the ribosomal stalk of the 50S ribosomal subunit. Interacts with L10 and the large rRNA to form the base of the stalk. L10 forms an elongated spine to which L12 dimers bind in a sequential fashion forming a multimeric L10(L12)X complex. One or more lysine residues are methylated.

Its function is as follows. Forms part of the ribosomal stalk which helps the ribosome interact with GTP-bound translation factors. The polypeptide is Large ribosomal subunit protein uL11 (Psychrobacter cryohalolentis (strain ATCC BAA-1226 / DSM 17306 / VKM B-2378 / K5)).